Consider the following 530-residue polypeptide: TNF receptor-associated factor family protein DDB_G0272829 (530 aa).

The RING-type; degenerate zinc finger occupies 35 to 81 (CQICEGLLISSLIPNRMKALQCINGHCFCLTCWESILEIKSECPTCR). 2 consecutive TRAF-type zinc fingers follow at residues 134-188 (RHES…KQMQ) and 189-246 (GHIL…NDND). Disordered stretches follow at residues 242 to 267 (NNDNDNNDSDENNSNQSLSSSSLSSS), 391 to 432 (TTTT…DNQG), and 483 to 530 (FNQL…GTSL). Composition is skewed to low complexity over residues 253–267 (NNSNQSLSSSSLSSS), 391–415 (TTTTTSTSDKNNNNNNNNNNNNNNN), and 485–502 (QLSQPQTQPQSQSQSQSL). The stretch at 361 to 422 (ILEHQQQQNQ…NNNNEDEEDD (62 aa)) forms a coiled coil. The segment covering 509-530 (ITINQNQNTPSNPFSIFSGTSL) has biased composition (polar residues).

It belongs to the TNF receptor-associated factor family.

The protein resides in the cytoplasm. Probable adapter protein and signal transducer that links members of the tumor necrosis factor receptor family to different signaling pathways by association with the receptor cytoplasmic domain and kinases. The polypeptide is TNF receptor-associated factor family protein DDB_G0272829 (Dictyostelium discoideum (Social amoeba)).